We begin with the raw amino-acid sequence, 561 residues long: Dihydroxy-acid dehydratase (561 aa).

Residue Cys-51 coordinates [2Fe-2S] cluster. Asp-83 contributes to the Mg(2+) binding site. Position 124 (Cys-124) interacts with [2Fe-2S] cluster. Mg(2+) is bound by residues Asp-125 and Lys-126. An N6-carboxylysine modification is found at Lys-126. Cys-196 lines the [2Fe-2S] cluster pocket. Glu-447 is a binding site for Mg(2+). Residue Ser-473 is the Proton acceptor of the active site.

Belongs to the IlvD/Edd family. As to quaternary structure, homodimer. It depends on [2Fe-2S] cluster as a cofactor. Mg(2+) is required as a cofactor.

The catalysed reaction is (2R)-2,3-dihydroxy-3-methylbutanoate = 3-methyl-2-oxobutanoate + H2O. The enzyme catalyses (2R,3R)-2,3-dihydroxy-3-methylpentanoate = (S)-3-methyl-2-oxopentanoate + H2O. The protein operates within amino-acid biosynthesis; L-isoleucine biosynthesis; L-isoleucine from 2-oxobutanoate: step 3/4. Its pathway is amino-acid biosynthesis; L-valine biosynthesis; L-valine from pyruvate: step 3/4. Functionally, functions in the biosynthesis of branched-chain amino acids. Catalyzes the dehydration of (2R,3R)-2,3-dihydroxy-3-methylpentanoate (2,3-dihydroxy-3-methylvalerate) into 2-oxo-3-methylpentanoate (2-oxo-3-methylvalerate) and of (2R)-2,3-dihydroxy-3-methylbutanoate (2,3-dihydroxyisovalerate) into 2-oxo-3-methylbutanoate (2-oxoisovalerate), the penultimate precursor to L-isoleucine and L-valine, respectively. This is Dihydroxy-acid dehydratase from Oceanobacillus iheyensis (strain DSM 14371 / CIP 107618 / JCM 11309 / KCTC 3954 / HTE831).